Here is a 675-residue protein sequence, read N- to C-terminus: Potassium-transporting ATPase ATP-binding subunit 2 (675 aa).

Transmembrane regions (helical) follow at residues 34–54 (IMFV…FPDI), 65–85 (LITI…SEAF), 216–236 (IALF…IVTL), and 245–265 (LILP…TTIG). Asp-304 (4-aspartylphosphate intermediate) is an active-site residue. ATP is bound by residues Asp-341, Glu-345, 372-379 (FTAETRMS), and Lys-390. The Mg(2+) site is built by Asp-513 and Asp-517. Transmembrane regions (helical) follow at residues 569–591 (ALTT…ALMM), 611–631 (AIIS…PIAM), and 644–664 (IFIN…FLGI).

It belongs to the cation transport ATPase (P-type) (TC 3.A.3) family. Type IA subfamily. In terms of assembly, the system is composed of three essential subunits: KdpA, KdpB and KdpC.

The protein localises to the cell membrane. It catalyses the reaction K(+)(out) + ATP + H2O = K(+)(in) + ADP + phosphate + H(+). Part of the high-affinity ATP-driven potassium transport (or Kdp) system, which catalyzes the hydrolysis of ATP coupled with the electrogenic transport of potassium into the cytoplasm. This subunit is responsible for energy coupling to the transport system and for the release of the potassium ions to the cytoplasm. In Staphylococcus aureus (strain MRSA252), this protein is Potassium-transporting ATPase ATP-binding subunit 2.